The following is a 200-amino-acid chain: Endochitinase (200 aa).

Glu-58 functions as the Proton donor in the catalytic mechanism.

It belongs to the glycosyl hydrolase 19 family. Chitinase class I subfamily.

The catalysed reaction is Random endo-hydrolysis of N-acetyl-beta-D-glucosaminide (1-&gt;4)-beta-linkages in chitin and chitodextrins.. In terms of biological role, this protein functions as a defense against chitin-containing fungal pathogens. This is Endochitinase from Avena sativa (Oat).